An 873-amino-acid chain; its full sequence is Sine oculis-binding protein homolog (873 aa).

The span at M1 to K14 shows a compositional bias: basic and acidic residues. The disordered stretch occupies residues M1 to E26. 2 FCS-type zinc fingers span residues D142–A180 and F216–N256. Disordered stretches follow at residues A307 to A338, R413 to L485, K550 to Q608, S742 to V766, and S779 to D811. The segment covering P312–A338 has biased composition (low complexity). Positions I460–L485 are enriched in pro residues. Positions G554–T570 are enriched in polar residues. Over residues P571–S603 the composition is skewed to low complexity. Residues L783–E793 are compositionally biased toward basic and acidic residues.

The protein belongs to the SOBP family.

Its function is as follows. Implicated in development of the cochlea. This Gallus gallus (Chicken) protein is Sine oculis-binding protein homolog.